The primary structure comprises 299 residues: Craniofacial development protein 1 (299 aa).

2 stretches are compositionally biased toward acidic residues: residues 1–18 (MEEF…DEDY) and 25–43 (YSED…DGEE). Disordered regions lie at residues 1–156 (MEEF…ELEK) and 192–224 (FFKQ…SSGM). Positions 49–65 (QGKKRKAQSIPARKRRQ) are enriched in basic residues. A compositionally biased stretch (acidic residues) spans 70–94 (LEEEEEEDANSESEGSSSEEEDDAA). Phosphoserine occurs at positions 82, 85, and 86. Residues 95–112 (EQEKGIGSEDARKKKEDE) show a composition bias toward basic and acidic residues. S116 is subject to Phosphoserine. A Glycyl lysine isopeptide (Lys-Gly) (interchain with G-Cter in SUMO2) cross-link involves residue K150. The tract at residues 178–217 (VTKEVDATSKEAKSFFKQNEKEKPQANVPSALPSLPAGSG) is hydrophilic. The segment covering 192–201 (FFKQNEKEKP) has biased composition (basic and acidic residues). S216 bears the Phosphoserine mark. The region spanning 218-299 (LKRSSGMSSL…RDLRLSKMKP (82 aa)) is the BCNT-C domain. Residue K219 is modified to N6-methyllysine. S250 bears the Phosphoserine mark.

Post-translationally, phosphorylated by CK2 (casein kinase II) in vitro. In terms of tissue distribution, ubiquitous.

Its subcellular location is the chromosome. The protein localises to the centromere. The protein resides in the kinetochore. In terms of biological role, may play a role during embryogenesis. In Homo sapiens (Human), this protein is Craniofacial development protein 1 (CFDP1).